Here is a 436-residue protein sequence, read N- to C-terminus: MTVYHFVGIKGTGMSSLAQILHDMKNTVQGSDYEKRFFTQVALEKRGISILPFDKNNIKEGQVIIAGNAFPDTHEEIMAAKELNIPVHRYHHFLGNLMSQYTSVAVTGAHGKTSTTGLLAHVMQGANPTSYLIGDGTGHGVENSKYFAFEACEYRRHFLSYYPDYAIMTNIDFDHPDYFADINDVFHAFQEMALQVKKGIIACGDDEELQKIQAKVPVIFYGFGEDNDFQARNIQKRTDGTVFDVFVRNTYYETFKITGYGNHSVLNALAVIALCHYENIDVEVVKHQLTTFEGVKRRFNEKTVRDQVIIDDYAHHPTEINATIEAAHQKYPEREIIAIFQPHTFSRTETFLDEFAESLSKADQVYLCDIFGSARENKGELTIEDLQKRIDGAELITDTTTDILKKHKNGVLIFMGAGDIQKFEAAYIKEVQVAEK.

An ATP-binding site is contributed by 108–114; that stretch reads GAHGKTS.

The protein belongs to the MurCDEF family.

The protein localises to the cytoplasm. The enzyme catalyses UDP-N-acetyl-alpha-D-muramate + L-alanine + ATP = UDP-N-acetyl-alpha-D-muramoyl-L-alanine + ADP + phosphate + H(+). It participates in cell wall biogenesis; peptidoglycan biosynthesis. Cell wall formation. The protein is UDP-N-acetylmuramate--L-alanine ligase of Bacillus cytotoxicus (strain DSM 22905 / CIP 110041 / 391-98 / NVH 391-98).